Reading from the N-terminus, the 353-residue chain is Photosystem II D2 protein (353 aa).

The residue at position 2 (Thr2) is an N-acetylthreonine. Thr2 is subject to Phosphothreonine. The helical transmembrane segment at 41-61 (CAYFALGGWFTGTTFVTSWYT) threads the bilayer. His118 provides a ligand contact to chlorophyll a. A helical transmembrane segment spans residues 125 to 141 (GFMLRQFELARSVQLRP). Pheophytin a is bound by residues Gln130 and Asn143. Residues 153–166 (VFVSVFLIYPLGQS) form a helical membrane-spanning segment. Residue His198 coordinates chlorophyll a. Residues 208-228 (AALLCAIHGATVENTLFEDGD) traverse the membrane as a helical segment. A plastoquinone contacts are provided by His215 and Phe262. His215 is a Fe cation binding site. Residue His269 participates in Fe cation binding. Residues 279–295 (GLWMSAIGVVGLALNLR) form a helical membrane-spanning segment.

It belongs to the reaction center PufL/M/PsbA/D family. As to quaternary structure, PSII is composed of 1 copy each of membrane proteins PsbA, PsbB, PsbC, PsbD, PsbE, PsbF, PsbH, PsbI, PsbJ, PsbK, PsbL, PsbM, PsbT, PsbX, PsbY, PsbZ, Psb30/Ycf12, at least 3 peripheral proteins of the oxygen-evolving complex and a large number of cofactors. It forms dimeric complexes. The cofactor is The D1/D2 heterodimer binds P680, chlorophylls that are the primary electron donor of PSII, and subsequent electron acceptors. It shares a non-heme iron and each subunit binds pheophytin, quinone, additional chlorophylls, carotenoids and lipids. There is also a Cl(-1) ion associated with D1 and D2, which is required for oxygen evolution. The PSII complex binds additional chlorophylls, carotenoids and specific lipids..

The protein localises to the plastid. It localises to the chloroplast thylakoid membrane. The enzyme catalyses 2 a plastoquinone + 4 hnu + 2 H2O = 2 a plastoquinol + O2. In terms of biological role, photosystem II (PSII) is a light-driven water:plastoquinone oxidoreductase that uses light energy to abstract electrons from H(2)O, generating O(2) and a proton gradient subsequently used for ATP formation. It consists of a core antenna complex that captures photons, and an electron transfer chain that converts photonic excitation into a charge separation. The D1/D2 (PsbA/PsbD) reaction center heterodimer binds P680, the primary electron donor of PSII as well as several subsequent electron acceptors. D2 is needed for assembly of a stable PSII complex. The protein is Photosystem II D2 protein of Lolium perenne (Perennial ryegrass).